Here is a 467-residue protein sequence, read N- to C-terminus: Argininosuccinate lyase (467 aa).

It belongs to the lyase 1 family. Argininosuccinate lyase subfamily.

It localises to the cytoplasm. It catalyses the reaction 2-(N(omega)-L-arginino)succinate = fumarate + L-arginine. The protein operates within amino-acid biosynthesis; L-arginine biosynthesis; L-arginine from L-ornithine and carbamoyl phosphate: step 3/3. The sequence is that of Argininosuccinate lyase from Rhizobium johnstonii (strain DSM 114642 / LMG 32736 / 3841) (Rhizobium leguminosarum bv. viciae).